The chain runs to 272 residues: N-acetylmuramoyl-L-alanine amidase CwlA (272 aa).

Positions 24-142 constitute an N-acetylmuramoyl-L-alanine amidase domain; it reads KAEYITIHNT…QDWNGKYCPH (119 aa).

Belongs to the N-acetylmuramoyl-L-alanine amidase 2 family.

It catalyses the reaction Hydrolyzes the link between N-acetylmuramoyl residues and L-amino acid residues in certain cell-wall glycopeptides.. Its function is as follows. Autolysins are involved in some important biological processes such as cell separation, cell-wall turnover, competence for genetic transformation, formation of the flagella and sporulation. This chain is N-acetylmuramoyl-L-alanine amidase CwlA (cwlA), found in Bacillus subtilis (strain 168).